The sequence spans 470 residues: GTPase grn1 (470 aa).

Positions Met-1–Arg-16 are enriched in basic residues. The interval Met-1–Tyr-56 is disordered. The segment covering Ser-17–Lys-27 has biased composition (basic and acidic residues). One can recognise a CP-type G domain in the interval Asp-153–Pro-333. Residues Asn-202–Asp-205, Gly-276–Ser-283, and Asp-326–Gly-329 each bind GTP. An RNA-binding region spans residues Ala-405 to Gly-415.

The protein belongs to the TRAFAC class YlqF/YawG GTPase family.

The protein localises to the nucleus. It is found in the nucleolus. Its function is as follows. Required for optimal growth. Required for normal processing of ribosomal pre-rRNA. Required for nuclear export of ribosomal protein rpl2501. The sequence is that of GTPase grn1 from Schizosaccharomyces pombe (strain 972 / ATCC 24843) (Fission yeast).